Consider the following 223-residue polypeptide: Putative archaetidylserine decarboxylase proenzyme (223 aa).

Serine 183 functions as the Schiff-base intermediate with substrate; via pyruvic acid in the catalytic mechanism. At serine 183 the chain carries Pyruvic acid (Ser); by autocatalysis.

This sequence belongs to the phosphatidylserine decarboxylase family. PSD-A subfamily. Heterodimer of a large membrane-associated beta subunit and a small pyruvoyl-containing alpha subunit. The cofactor is pyruvate. Post-translationally, is synthesized initially as an inactive proenzyme. Formation of the active enzyme involves a self-maturation process in which the active site pyruvoyl group is generated from an internal serine residue via an autocatalytic post-translational modification. Two non-identical subunits are generated from the proenzyme in this reaction, and the pyruvate is formed at the N-terminus of the alpha chain, which is derived from the carboxyl end of the proenzyme. The post-translation cleavage follows an unusual pathway, termed non-hydrolytic serinolysis, in which the side chain hydroxyl group of the serine supplies its oxygen atom to form the C-terminus of the beta chain, while the remainder of the serine residue undergoes an oxidative deamination to produce ammonia and the pyruvoyl prosthetic group on the alpha chain.

It is found in the cell membrane. The enzyme catalyses archaetidylserine + H(+) = archaetidylethanolamine + CO2. Functionally, catalyzes the formation of archaetidylethanolamine (PtdEtn) from archaetidylserine (PtdSer). The chain is Putative archaetidylserine decarboxylase proenzyme from Methanothermobacter thermautotrophicus (strain ATCC 29096 / DSM 1053 / JCM 10044 / NBRC 100330 / Delta H) (Methanobacterium thermoautotrophicum).